A 247-amino-acid polypeptide reads, in one-letter code: Aliphatic sulfonates import ATP-binding protein SsuB 3 (247 aa).

In terms of domain architecture, ABC transporter spans 28 to 242 (VSVRGLQRRY…ALRSILLEEL (215 aa)). 60–67 (GESGCGKT) is an ATP binding site.

It belongs to the ABC transporter superfamily. Aliphatic sulfonates importer (TC 3.A.1.17.2) family. The complex is composed of two ATP-binding proteins (SsuB), two transmembrane proteins (SsuC) and a solute-binding protein (SsuA).

The protein resides in the cell inner membrane. The enzyme catalyses ATP + H2O + aliphatic sulfonate-[sulfonate-binding protein]Side 1 = ADP + phosphate + aliphatic sulfonateSide 2 + [sulfonate-binding protein]Side 1.. Part of the ABC transporter complex SsuABC involved in aliphatic sulfonates import. Responsible for energy coupling to the transport system. The chain is Aliphatic sulfonates import ATP-binding protein SsuB 3 from Paraburkholderia xenovorans (strain LB400).